The chain runs to 118 residues: Small ribosomal subunit protein uS13 (118 aa).

Residues 94–118 (SLPLRGQRTKTNARTRKGPRKAIKK) are disordered.

The protein belongs to the universal ribosomal protein uS13 family. In terms of assembly, part of the 30S ribosomal subunit. Forms a loose heterodimer with protein S19. Forms two bridges to the 50S subunit in the 70S ribosome.

In terms of biological role, located at the top of the head of the 30S subunit, it contacts several helices of the 16S rRNA. In the 70S ribosome it contacts the 23S rRNA (bridge B1a) and protein L5 of the 50S subunit (bridge B1b), connecting the 2 subunits; these bridges are implicated in subunit movement. Contacts the tRNAs in the A and P-sites. This Pseudoalteromonas atlantica (strain T6c / ATCC BAA-1087) protein is Small ribosomal subunit protein uS13.